A 547-amino-acid chain; its full sequence is Chaperonin GroEL (547 aa).

ATP-binding positions include 30-33 (TLGP), Lys51, 87-91 (DGTTT), Gly415, and Asp495.

Belongs to the chaperonin (HSP60) family. In terms of assembly, forms a cylinder of 14 subunits composed of two heptameric rings stacked back-to-back. Interacts with the co-chaperonin GroES.

The protein resides in the cytoplasm. It carries out the reaction ATP + H2O + a folded polypeptide = ADP + phosphate + an unfolded polypeptide.. In terms of biological role, together with its co-chaperonin GroES, plays an essential role in assisting protein folding. The GroEL-GroES system forms a nano-cage that allows encapsulation of the non-native substrate proteins and provides a physical environment optimized to promote and accelerate protein folding. The chain is Chaperonin GroEL from Shewanella pealeana (strain ATCC 700345 / ANG-SQ1).